The primary structure comprises 281 residues: Acidic leucine-rich nuclear phosphoprotein 32-related protein (281 aa).

4 LRR repeats span residues 29 to 52 (YESL…EKEL), 56 to 78 (FKNL…IPSI), 79 to 103 (ATLN…IVQN), and 105 to 128 (PNIK…TLKE). The LRRCT domain occupies 140–178 (NPFADNPNYRKELFEFLPNVKIIDCYNKEGMEVLSSDEE). Positions 197–244 (FKDEDDEDEEFVPNDNEDDDEDDELDDDLEDEDMEDLDKEDLDKEDYD) are enriched in acidic residues. The disordered stretch occupies residues 197-281 (FKDEDDEDEE…DMDLKKTKLE (85 aa)). The segment covering 245–266 (IDTKETEGVNKDEKSNKRKQDA) has biased composition (basic and acidic residues).

This sequence belongs to the ANP32 family.

In Plasmodium falciparum (isolate 3D7), this protein is Acidic leucine-rich nuclear phosphoprotein 32-related protein.